Reading from the N-terminus, the 215-residue chain is Adenylate kinase (215 aa).

Residue 10–15 participates in ATP binding; sequence GAGKGT. Residues 30–59 are NMP; sequence STGDMFRAAMKNNTELGRKAKSFMDNGDLV. Residues Thr31, Arg36, 57–59, 85–88, and Gln92 contribute to the AMP site; these read DLV and GFPR. The tract at residues 126–163 is LID; the sequence is GRWICRTCGKTYHEIYNPPKVAGKCDLDGGELYQRDDD. Residue Arg127 participates in ATP binding. Residues Cys130 and Cys133 each contribute to the Zn(2+) site. 136–137 is an ATP binding site; it reads TY. 2 residues coordinate Zn(2+): Cys150 and Asp153. 2 residues coordinate AMP: Arg160 and Arg171. Gln199 contacts ATP.

It belongs to the adenylate kinase family. Monomer.

It localises to the cytoplasm. It carries out the reaction AMP + ATP = 2 ADP. It functions in the pathway purine metabolism; AMP biosynthesis via salvage pathway; AMP from ADP: step 1/1. Functionally, catalyzes the reversible transfer of the terminal phosphate group between ATP and AMP. Plays an important role in cellular energy homeostasis and in adenine nucleotide metabolism. In Listeria monocytogenes serotype 4a (strain HCC23), this protein is Adenylate kinase.